The sequence spans 1680 residues: GRIP and coiled-coil domain-containing protein 2 (1680 aa).

M1 is modified (N-acetylmethionine). Low complexity predominate over residues 1–14 (MEDSAPDAVAAAPS). Disordered regions lie at residues 1–23 (MEDS…KLET) and 1468–1522 (KSEP…SSAG). Residues 31–1614 (KFAKKQMMLL…REKSVANLEY (1584 aa)) are a coiled coil. Positions 1469–1484 (SEPSTRSPASSHQPSK) are enriched in polar residues. Residues S1475 and S1479 each carry the phosphoserine modification. The mediates interaction with RAB6A stretch occupies residues 1570–1609 (HLNGLLRETEATNAILMEQIKLLKSEIRRLERNQEREKSV). The segment at 1570–1680 (HLNGLLRETE…SYLHSWSGLR (111 aa)) is mediates interaction with RAB9A. One can recognise a GRIP domain in the interval 1605–1655 (REKSVANLEYLKNVLLRFIFLKPGSERERLLPVIDTMLQLSPEEKGKLATV).

As to quaternary structure, homodimer. Interacts (via GRIP domain) with RAB6A (preferentially in its GTP-bound form). May interact (RAB6A-dependent) with ARL1; might be involved in GCC2 Golgi localization. Interacts (probably via GRIP domain) with RAB9A (preferentially in its GTP-bound form). Interacts with CLASP1 and CLASP2; recruits both proteins to membranes of the TGN. Interacts with STX16.

The protein localises to the cytoplasm. It localises to the golgi apparatus. Its subcellular location is the trans-Golgi network membrane. Its function is as follows. Golgin which probably tethers transport vesicles to the trans-Golgi network (TGN) and regulates vesicular transport between the endosomes and the Golgi. As a RAB9A effector it is involved in recycling of the mannose 6-phosphate receptor from the late endosomes to the TGN. May also play a role in transport between the recycling endosomes and the Golgi. Required for maintenance of the Golgi structure, it is involved in the biogenesis of noncentrosomal, Golgi-associated microtubules through recruitment of CLASP1 and CLASP2. The protein is GRIP and coiled-coil domain-containing protein 2 (Gcc2) of Mus musculus (Mouse).